The following is a 715-amino-acid chain: SEC14-like protein 1 (715 aa).

Residues 1–175 form the PRELI/MSF1 domain; the sequence is MVQKYQSPVR…YLRQLEEEGI (175 aa). Residues 1–510 form a required for interaction and inhibitory function toward RIGI region; sequence MVQKYQSPVR…VPKSLYRTAE (510 aa). Residue T234 is modified to Phosphothreonine. The 177-residue stretch at 319–495 folds into the CRAL-TRIO domain; that stretch reads PPQVLQDYYA…FLSGECMCEV (177 aa). Residues 521–674 enclose the GOLD domain; it reads TETIYQSASV…KCKVMYYTEV (154 aa). Residue S586 is modified to Phosphoserine.

Interacts with RIGI (via tandem CARD domain); the interaction is direct. Interacts (via GOLD domain) with SLC18A3; the interaction is direct. Interacts with SLC5A7 (via GOLD domain); the interaction is direct. Ubiquitous.

Its subcellular location is the cytoplasm. The protein localises to the golgi apparatus. In terms of biological role, may play a role in innate immunity by inhibiting the antiviral RIG-I signaling pathway. In this pathway, functions as a negative regulator of RIGI, the cytoplasmic sensor of viral nucleic acids. Prevents the interaction of RIGI with MAVS/IPS1, an important step in signal propagation. May also regulate the SLC18A3 and SLC5A7 cholinergic transporters. The polypeptide is SEC14-like protein 1 (SEC14L1) (Homo sapiens (Human)).